We begin with the raw amino-acid sequence, 604 residues long: Kelch-like protein 15 (604 aa).

One can recognise a BTB domain in the interval 31–98 (LDVTLVIEDH…MYYGTIELSM (68 aa)). The region spanning 133–237 (CAEIMRLLDD…TPSSVFEKVK (105 aa)) is the BACK domain. Kelch repeat units follow at residues 328–379 (FVFL…VIGK), 381–426 (IYAV…VLNN), 428–473 (LFIT…NKSK), 489–542 (KLYV…VLDK), and 544–590 (IMVL…VCNL).

As to quaternary structure, homodimer. Dimerization does not affect PPP2R5B-binding, but is required for its proteasomal degradation. Interacts with CUL3. Directly interacts with PPP2R5B; this interaction leads to PPP2R5B proteasomal degradation. Interacts with RBBP8/CtIP; this interaction leads to RBBP8 proteasomal degradation. Interacts with PACMP micropeptide; interaction prevents ubiquitination and degradation of RBBP8/CtIP.

The protein resides in the nucleus. It participates in protein modification; protein ubiquitination. Functionally, substrate-specific adapter for CUL3 E3 ubiquitin-protein ligase complex. Acts as an adapter for CUL3 to target the serine/threonine-protein phosphatase 2A (PP2A) subunit PPP2R5B for ubiquitination and subsequent proteasomal degradation, thus promoting exchange with other regulatory subunits and regulating PP2A holoenzyme composition. Acts as an adapter for CUL3 to target the DNA-end resection factor RBBP8/CtIP for ubiquitination and subsequent proteasomal degradation. Through the regulation of RBBP8/CtIP protein turnover, plays a key role in DNA damage response, favoring DNA double-strand repair through error-prone non-homologous end joining (NHEJ) over error-free, RBBP8-mediated homologous recombination (HR). The protein is Kelch-like protein 15 (Klhl15) of Mus musculus (Mouse).